The chain runs to 100 residues: NADH-quinone oxidoreductase subunit K (100 aa).

The next 3 helical transmembrane spans lie at 2–22 (VTLN…LVGV), 28–48 (LLML…GLVA), and 63–83 (FFII…LILW).

The protein belongs to the complex I subunit 4L family. As to quaternary structure, NDH-1 is composed of 14 different subunits. Subunits NuoA, H, J, K, L, M, N constitute the membrane sector of the complex.

Its subcellular location is the cell inner membrane. It carries out the reaction a quinone + NADH + 5 H(+)(in) = a quinol + NAD(+) + 4 H(+)(out). NDH-1 shuttles electrons from NADH, via FMN and iron-sulfur (Fe-S) centers, to quinones in the respiratory chain. The immediate electron acceptor for the enzyme in this species is believed to be ubiquinone. Couples the redox reaction to proton translocation (for every two electrons transferred, four hydrogen ions are translocated across the cytoplasmic membrane), and thus conserves the redox energy in a proton gradient. The protein is NADH-quinone oxidoreductase subunit K of Wolinella succinogenes (strain ATCC 29543 / DSM 1740 / CCUG 13145 / JCM 31913 / LMG 7466 / NCTC 11488 / FDC 602W) (Vibrio succinogenes).